Reading from the N-terminus, the 236-residue chain is 2,3,4,5-tetrahydropyridine-2,6-dicarboxylate N-acetyltransferase (236 aa).

This sequence belongs to the transferase hexapeptide repeat family. DapH subfamily.

It carries out the reaction (S)-2,3,4,5-tetrahydrodipicolinate + acetyl-CoA + H2O = L-2-acetamido-6-oxoheptanedioate + CoA. Its pathway is amino-acid biosynthesis; L-lysine biosynthesis via DAP pathway; LL-2,6-diaminopimelate from (S)-tetrahydrodipicolinate (acetylase route): step 1/3. Functionally, catalyzes the transfer of an acetyl group from acetyl-CoA to tetrahydrodipicolinate. The protein is 2,3,4,5-tetrahydropyridine-2,6-dicarboxylate N-acetyltransferase of Clostridium botulinum (strain Kyoto / Type A2).